Reading from the N-terminus, the 102-residue chain is Large ribosomal subunit protein bL21 (102 aa).

It belongs to the bacterial ribosomal protein bL21 family. As to quaternary structure, part of the 50S ribosomal subunit. Contacts protein L20.

Its function is as follows. This protein binds to 23S rRNA in the presence of protein L20. The protein is Large ribosomal subunit protein bL21 of Campylobacter lari (strain RM2100 / D67 / ATCC BAA-1060).